Reading from the N-terminus, the 138-residue chain is MTMYQTINEWVDYIDKGCSVLHLDFNVFKKELSLDIKVFEDEGEYTHKISFQNVASAYYSADVGDMRLEKIDPEEYNWQVFEMSYHPEGIGNLSNSIIPEYQSNANFLIDMNRMLIAIEAETVRFDDQSFYAYQLNTK.

This is an uncharacterized protein from Bacillus subtilis (strain 168).